We begin with the raw amino-acid sequence, 55 residues long: Histone H1 (55 aa).

The span at M1–K15 shows a compositional bias: low complexity. Positions M1–A28 are disordered. Residue A2 is modified to N-acetylalanine. The span at A16–K27 shows a compositional bias: basic residues. Residues A28–K55 enclose the H15 domain.

This sequence belongs to the histone H1/H5 family.

The protein localises to the nucleus. It is found in the chromosome. Its subcellular location is the secreted. In terms of biological role, histones H1 are necessary for the condensation of nucleosome chains into higher-order structures. Functionally, SAMP H1 has antibacterial activity against Gram-negative bacteria E.coli, A.salmonicida subsp salmonicida, V.anguillarum and S.typhimurium and Gram-positive bacteria B.subtilis and L.ivanovii. This chain is Histone H1, found in Salmo salar (Atlantic salmon).